Consider the following 160-residue polypeptide: Phosphopantetheine adenylyltransferase (160 aa).

T11 lines the substrate pocket. ATP is bound by residues 11–12 (TF) and H19. 3 residues coordinate substrate: K43, T75, and R89. ATP is bound by residues 90–92 (GLR), E100, and 125–131 (YSFLSSS).

It belongs to the bacterial CoaD family. In terms of assembly, homohexamer. Requires Mg(2+) as cofactor.

Its subcellular location is the cytoplasm. It catalyses the reaction (R)-4'-phosphopantetheine + ATP + H(+) = 3'-dephospho-CoA + diphosphate. The protein operates within cofactor biosynthesis; coenzyme A biosynthesis; CoA from (R)-pantothenate: step 4/5. In terms of biological role, reversibly transfers an adenylyl group from ATP to 4'-phosphopantetheine, yielding dephospho-CoA (dPCoA) and pyrophosphate. In Listeria monocytogenes serovar 1/2a (strain ATCC BAA-679 / EGD-e), this protein is Phosphopantetheine adenylyltransferase.